Consider the following 142-residue polypeptide: ATP synthase epsilon chain (142 aa).

This sequence belongs to the ATPase epsilon chain family. In terms of assembly, F-type ATPases have 2 components, CF(1) - the catalytic core - and CF(0) - the membrane proton channel. CF(1) has five subunits: alpha(3), beta(3), gamma(1), delta(1), epsilon(1). CF(0) has three main subunits: a, b and c.

Its subcellular location is the cell inner membrane. Its function is as follows. Produces ATP from ADP in the presence of a proton gradient across the membrane. This Histophilus somni (strain 2336) (Haemophilus somnus) protein is ATP synthase epsilon chain.